Consider the following 502-residue polypeptide: Lysine--tRNA ligase (502 aa).

The Mg(2+) site is built by glutamate 413 and glutamate 420.

This sequence belongs to the class-II aminoacyl-tRNA synthetase family. In terms of assembly, homodimer. Mg(2+) serves as cofactor.

The protein resides in the cytoplasm. It carries out the reaction tRNA(Lys) + L-lysine + ATP = L-lysyl-tRNA(Lys) + AMP + diphosphate. The chain is Lysine--tRNA ligase from Haemophilus influenzae (strain 86-028NP).